The primary structure comprises 115 residues: uncharacterized protein (115 aa).

3 helical membrane-spanning segments follow: residues 7–27 (TLIF…IWFD), 40–60 (YALT…LLAA), and 72–92 (IVLV…YFYL).

The protein resides in the cell membrane. This is an uncharacterized protein from Haemophilus influenzae (strain ATCC 51907 / DSM 11121 / KW20 / Rd).